Here is a 90-residue protein sequence, read N- to C-terminus: RNA-binding protein Hfq (90 aa).

Residues 9–69 enclose the Sm domain; the sequence is DRFLNHLRVN…ISTIIPSSYV (61 aa).

Belongs to the Hfq family. In terms of assembly, homohexamer.

RNA chaperone that binds small regulatory RNA (sRNAs) and mRNAs to facilitate mRNA translational regulation in response to envelope stress, environmental stress and changes in metabolite concentrations. Also binds with high specificity to tRNAs. The sequence is that of RNA-binding protein Hfq from Thermotoga sp. (strain RQ2).